Reading from the N-terminus, the 443-residue chain is KH domain-containing, RNA-binding, signal transduction-associated protein 1 (443 aa).

The disordered stretch occupies residues 1–96 (MQRRDDPAAR…LPPSATASVK (96 aa)). A compositionally biased stretch (low complexity) spans 10–21 (RMSRSSGRSGSM). Phosphoserine is present on residues Ser-18, Ser-20, and Ser-29. Thr-33 bears the Phosphothreonine mark. An Asymmetric dimethylarginine; by PRMT1 modification is found at Arg-45. An Asymmetric dimethylarginine; partial; by PRMT1 modification is found at Arg-52. Ser-58 bears the Phosphoserine mark. Thr-84 bears the Phosphothreonine; by MAPK1 mark. Glycyl lysine isopeptide (Lys-Gly) (interchain with G-Cter in SUMO2) cross-links involve residues Lys-96 and Lys-102. The involved in homodimerization stretch occupies residues 100–260 (ENKYLPELMA…VKKFLVPDMM (161 aa)). At Ser-113 the chain carries Phosphoserine. Residue Lys-139 forms a Glycyl lysine isopeptide (Lys-Gly) (interchain with G-Cter in SUMO2) linkage. Phosphoserine is present on Ser-150. One can recognise a KH domain in the interval 171–197 (NFVGKILGPQGNTIKRLQEETGAKISV). At Lys-175 the chain carries N6-acetyllysine; alternate. Lys-175 participates in a covalent cross-link: Glycyl lysine isopeptide (Lys-Gly) (interchain with G-Cter in SUMO2); alternate. Thr-183 is modified (phosphothreonine). Residues 280-293 (PSRGRGVPVRGRGA) are compositionally biased toward low complexity. The tract at residues 280–316 (PSRGRGVPVRGRGAAPPPPPVPRGRGVGPPRGALVRG) is disordered. An omega-N-methylarginine mark is found at Arg-282, Arg-284, and Arg-291. Arg-304 is modified (asymmetric dimethylarginine; by PRMT1). The segment covering 307–316 (GPPRGALVRG) has biased composition (low complexity). 4 positions are modified to omega-N-methylarginine; by PRMT1: Arg-310, Arg-315, Arg-320, and Arg-325. Arg-320 bears the Dimethylated arginine; in A2780 ovarian carcinoma cell line mark. The interval 327 to 346 (ATVTRGVPPPPTVRGAPAPR) is disordered. Arg-331 and Arg-340 each carry dimethylated arginine; in A2780 ovarian carcinoma cell line. Arg-331 carries the post-translational modification Asymmetric dimethylarginine; alternate. Omega-N-methylarginine; by PRMT1; alternate is present on Arg-331. Arg-340 carries the omega-N-methylarginine; by PRMT1 modification. Positions 351 to 443 (GIQRIPLPPP…AYREHPYGRY (93 aa)) are interaction with HNRNPA1. Tyr-387 is modified (phosphotyrosine). The residue at position 390 (Ser-390) is a Phosphoserine. Residues 400–420 (GHGEVQDSYEAYGQDDWNGTR) are interaction with ZBTB7A. Residues 411-443 (YGQDDWNGTRPSLKAPPARPVKGAYREHPYGRY) form a disordered region. Residue Lys-432 forms a Glycyl lysine isopeptide (Lys-Gly) (interchain with G-Cter in SUMO2) linkage. Positions 434 to 443 (AYREHPYGRY) are enriched in basic and acidic residues. Phosphotyrosine; by PTK6 occurs at positions 435, 440, and 443.

It belongs to the KHDRBS family. In terms of assembly, self-associates to form homooligomers when bound to RNA, oligomerization appears to be limited when binding to proteins; dimerization increases RNA affinity. Forms a trimeric complex in the nucleus consisting of BANP, HDAC6 and KHDRBS1/SAM68; HDAC6 keeps KHDRBS1 in a deacetylated state which inhibits the inclusion of CD44 alternate exons. The complex is disrupted by MAPK1/MAPK3-mediated phosphorylation of BANP which results in BANP export to the cytoplasm. This facilitates acetylation of KHDRBS1 and CD44 variant exon inclusion. Interacts with KHDRBS3/SLIM-2. Interacts with KHDRBS2/SLIM-1; heterooligomer formation of KHDRBS family proteins may modulate RNA substrate specificity. Interacts with RASA1, LCK, FYN, PTPN6, PLCG1, GRB2, CBL, JAK3, PIK3R, STAT3, APC, HNRNPA1. Interacts with PTK6 (via SH3 and SH2 domains). Forms a complex with ILF2, ILF3, YLPM1, RBMX, NCOA5 and PPP1CA. Does not interact with TPR. Interacts with PRMT1. Binds WBP4/FBP21 (via WW domains), FNBP4/FBP30 (via WW domains). Interacts (via Arg/Gly-rich-flanked Pro-rich regions) with FYN (via the SH3 domain). Interacts with the non-receptor tyrosine kinase SRMS; the interaction leads to phosphorylation of KHDRBS1. Interacts with ZBTB7A; negatively regulates KHDRBS1 splicing activity toward BCL2L1. In terms of processing, tyrosine phosphorylated by several non-receptor tyrosine kinases including LCK, FYN and JAK3. Also tyrosine phosphorylated by the non-receptor tyrosine kinase SRMS in an EGF-dependent manner. Negatively correlates with ability to bind RNA but required for many interactions with proteins. Phosphorylation by PTK6 negatively regulates its RNA binding ability. Phosphorylation by PTK6 at Tyr-440 dictates the nuclear localization of KHDRBS1. Phosphorylation at Tyr-387 disrupts interaction with APC. Phosphorylation at tyrosine residues by FYN inverts activity on modulation of BCL2L1 alternative splicing. Post-translationally, acetylated. Positively correlates with ability to bind RNA. Deacetylated by HDAC6; this regulates alternative splicing by inhibiting the inclusion of CD44 alternate exons. Arginine methylation is required for nuclear localization. Also can affect interaction with other proteins. Inhibits interaction with Src-like SH3 domains, but not interaction with WW domains of WBP4/FBP21 and FNBP4/FBP30. Ubiquitously expressed in all tissue examined. Isoform 1 is expressed at lower levels in brain, skeletal muscle, and liver whereas isoform 3 is intensified in skeletal muscle and in liver.

Its subcellular location is the nucleus. The protein resides in the cytoplasm. It localises to the membrane. Recruited and tyrosine phosphorylated by several receptor systems, for example the T-cell, leptin and insulin receptors. Once phosphorylated, functions as an adapter protein in signal transduction cascades by binding to SH2 and SH3 domain-containing proteins. Role in G2-M progression in the cell cycle. Represses CBP-dependent transcriptional activation apparently by competing with other nuclear factors for binding to CBP. Also acts as a putative regulator of mRNA stability and/or translation rates and mediates mRNA nuclear export. Positively regulates the association of constitutive transport element (CTE)-containing mRNA with large polyribosomes and translation initiation. According to some authors, is not involved in the nucleocytoplasmic export of unspliced (CTE)-containing RNA species according to. RNA-binding protein that plays a role in the regulation of alternative splicing and influences mRNA splice site selection and exon inclusion. Binds to RNA containing 5'-[AU]UAA-3' as a bipartite motif spaced by more than 15 nucleotides. Binds poly(A). Can regulate CD44 alternative splicing in a Ras pathway-dependent manner. In cooperation with HNRNPA1 modulates alternative splicing of BCL2L1 by promoting splicing toward isoform Bcl-X(S), and of SMN1. Can regulate alternative splicing of NRXN1 and NRXN3 in the laminin G-like domain 6 containing the evolutionary conserved neurexin alternative spliced segment 4 (AS4) involved in neurexin selective targeting to postsynaptic partners. In a neuronal activity-dependent manner cooperates synergistically with KHDRBS2/SLIM-1 in regulation of NRXN1 exon skipping at AS4. The cooperation with KHDRBS2/SLIM-1 is antagonistic for regulation of NXRN3 alternative splicing at AS4. In terms of biological role, isoform 3, which is expressed in growth-arrested cells only, inhibits S phase. The chain is KH domain-containing, RNA-binding, signal transduction-associated protein 1 from Homo sapiens (Human).